Here is a 311-residue protein sequence, read N- to C-terminus: tRNA dimethylallyltransferase (311 aa).

ATP is bound at residue 12-19 (GPTASGKT). A substrate-binding site is contributed by 14-19 (TASGKT). Interaction with substrate tRNA stretches follow at residues 37 to 40 (DSAL), 161 to 165 (QRINR), and 241 to 246 (RCVGYR).

The protein belongs to the IPP transferase family. Monomer. The cofactor is Mg(2+).

The catalysed reaction is adenosine(37) in tRNA + dimethylallyl diphosphate = N(6)-dimethylallyladenosine(37) in tRNA + diphosphate. Functionally, catalyzes the transfer of a dimethylallyl group onto the adenine at position 37 in tRNAs that read codons beginning with uridine, leading to the formation of N6-(dimethylallyl)adenosine (i(6)A). The sequence is that of tRNA dimethylallyltransferase from Histophilus somni (strain 2336) (Haemophilus somnus).